The sequence spans 302 residues: Sulfate adenylyltransferase subunit 2 (302 aa).

Residues 280–302 (RQGRLIDSDQSASMEQKKRQGYF) form a disordered region.

Belongs to the PAPS reductase family. CysD subfamily. In terms of assembly, heterodimer composed of CysD, the smaller subunit, and CysN.

It catalyses the reaction sulfate + ATP + H(+) = adenosine 5'-phosphosulfate + diphosphate. It functions in the pathway sulfur metabolism; hydrogen sulfide biosynthesis; sulfite from sulfate: step 1/3. In terms of biological role, with CysN forms the ATP sulfurylase (ATPS) that catalyzes the adenylation of sulfate producing adenosine 5'-phosphosulfate (APS) and diphosphate, the first enzymatic step in sulfur assimilation pathway. APS synthesis involves the formation of a high-energy phosphoric-sulfuric acid anhydride bond driven by GTP hydrolysis by CysN coupled to ATP hydrolysis by CysD. The sequence is that of Sulfate adenylyltransferase subunit 2 from Shewanella frigidimarina (strain NCIMB 400).